A 1664-amino-acid polypeptide reads, in one-letter code: DNA-directed RNA polymerase I subunit RPA190 (1664 aa).

Residues C62, C65, C72, H75, C102, C105, C233, and C236 each contribute to the Zn(2+) site. The tract at residues 280 to 310 (QAKKLDGSNEASANDEESFDVGRNPTTRPKT) is disordered. 3 residues coordinate Mg(2+): D627, D629, and D631. S889 carries the phosphoserine modification. Residues 992–1004 (PQEYYFHCMAGRE) form a bridging helix region. Residues 1343–1423 (DIGVAVPRLQ…DSDSEDEDVD (81 aa)) form a disordered region. The segment covering 1393–1414 (ETMREAEKSSDEEGIDSDKESD) has biased composition (basic and acidic residues). Position 1636 is a phosphoserine (S1636).

Belongs to the RNA polymerase beta' chain family. Component of the RNA polymerase I (Pol I) complex consisting of 14 subunits: RPA135, RPA190, RPC40, RPA14, RPB5, RPO26, RPA43, RPB8, RPA12, RPB10, RPC19, RPC10, RPA49 and RPA34. The complex is composed of a horseshoe-shaped core containing ten subunits (RPA135, RPA190, RPB5, RPO26, RPB8, RPB10, RPC10, RPA12, RPC19 and RPC40) where RPA135 and RPA190 form the DNA-binding cleft. Outside of the core, RPA14 and RPA43 form the stalk that mediates interactions with transcription initiation factors and newly synthesized RNA.

It localises to the nucleus. The protein resides in the nucleolus. The enzyme catalyses RNA(n) + a ribonucleoside 5'-triphosphate = RNA(n+1) + diphosphate. In terms of biological role, DNA-dependent RNA polymerases catalyze the transcription of DNA into RNA using the four ribonucleoside triphosphates as substrates. Component of RNA polymerase I (Pol I) which synthesizes ribosomal RNA precursors. Besides, RNA polymerase I has intrinsic RNA cleavage activity. RPA190 and RPA135 both contribute to the polymerase catalytic activity and together form the Pol I active center. In addition, subunit RPA12 contributes a catalytic zinc ribbon that is required for RNA cleavage by Pol I. A single stranded DNA template strand of the promoter is positioned within the central active site cleft of Pol I. A bridging helix emanates from RPA190 and crosses the cleft near the catalytic site and is thought to promote translocation of Pol I by acting as a ratchet that moves the RNA-DNA hybrid through the active site by switching from straight to bent conformations at each step of nucleotide addition. The sequence is that of DNA-directed RNA polymerase I subunit RPA190 (RPA190) from Saccharomyces cerevisiae (strain ATCC 204508 / S288c) (Baker's yeast).